Reading from the N-terminus, the 443-residue chain is Zinc finger CCCH domain-containing protein 63 (443 aa).

2 disordered regions span residues 1–29 (MDFD…MAPT) and 56–99 (LPGP…SSSW). 2 consecutive C3H1-type zinc fingers follow at residues 30–56 (DTRQ…HREL) and 109–136 (TKTE…HCWS). 6 WD repeats span residues 149–190 (GHEK…GVLK), 228–265 (GPVG…NCFE), 272–311 (GHTL…QTLT), 313–349 (HSSV…NLEV), 354–396 (KEEH…LFIR), and 404–442 (FAKQ…TAAL).

The polypeptide is Zinc finger CCCH domain-containing protein 63 (ZFWD2) (Arabidopsis thaliana (Mouse-ear cress)).